Here is a 277-residue protein sequence, read N- to C-terminus: Phosphonates import ATP-binding protein PhnC 2 (277 aa).

The region spanning 5-253 (IHVQGLNKTF…FLNDLYGADA (249 aa)) is the ABC transporter domain. Position 37-44 (37-44 (GASGSGKS)) interacts with ATP.

It belongs to the ABC transporter superfamily. Phosphonates importer (TC 3.A.1.9.1) family. As to quaternary structure, the complex is composed of two ATP-binding proteins (PhnC), two transmembrane proteins (PhnE) and a solute-binding protein (PhnD).

It localises to the cell inner membrane. The enzyme catalyses phosphonate(out) + ATP + H2O = phosphonate(in) + ADP + phosphate + H(+). In terms of biological role, part of the ABC transporter complex PhnCDE involved in phosphonates import. Responsible for energy coupling to the transport system. The protein is Phosphonates import ATP-binding protein PhnC 2 of Pseudomonas syringae pv. syringae (strain B728a).